The chain runs to 226 residues: Glutathione S-transferase-like protein gedE (226 aa).

The GST N-terminal domain maps to 4-85; that stretch reads LLPIKVWGQG…YLVERYDTAH (82 aa). The GST C-terminal domain occupies 92–226; the sequence is DTNDAQHARQ…VLSAVMPPPS (135 aa).

This sequence belongs to the GST superfamily.

Its pathway is secondary metabolite biosynthesis. In terms of biological role, glutathione S-transferase-like protein; part of the gene cluster that mediates the biosynthesis of geodin, an intermediate in the biosynthesis of other natural products. The pathway begins with the synthesis of atrochrysone thioester by the polyketide synthase (PKS) gedC. The atrochrysone carboxyl ACP thioesterase gedB then breaks the thioester bond and releases the atrochrysone carboxylic acid from gedC. The atrochrysone carboxylic acid is then converted to atrochrysone which is further transformed into emodinanthrone. The next step is performed by the emodinanthrone oxygenase gedH that catalyzes the oxidation of emodinanthrone to emodin. Emodin O-methyltransferase encoded probably by gedA then catalyzes methylation of the 8-hydroxy group of emodin to form questin. Ring cleavage of questin by questin oxidase gedK leads to desmethylsulochrin via several intermediates including questin epoxide. Another methylation step probably catalyzed by methyltransferase gedG leads to the formation of sulochrin which is further converted to dihydrogeodin by the sulochrin halogenase gedL. Finally, the dihydrogeodin oxidase gedJ catalyzes the stereospecific phenol oxidative coupling reaction converting dihydrogeodin to geodin. The chain is Glutathione S-transferase-like protein gedE from Aspergillus terreus (strain NIH 2624 / FGSC A1156).